Here is a 200-residue protein sequence, read N- to C-terminus: Dual-action ribosomal maturation protein DarP (200 aa).

2 disordered regions span residues 1–25 and 177–200; these read MTRK…DRPS and TASG…DDEA. Positions 12-25 are enriched in basic and acidic residues; that stretch reads HAAEVDDNGYDRPS. Residues 184–200 show a composition bias toward acidic residues; sequence GDDEAADEAGDDHDDEA.

The protein belongs to the DarP family.

The protein localises to the cytoplasm. In terms of biological role, member of a network of 50S ribosomal subunit biogenesis factors which assembles along the 30S-50S interface, preventing incorrect 23S rRNA structures from forming. Promotes peptidyl transferase center (PTC) maturation. The sequence is that of Dual-action ribosomal maturation protein DarP from Burkholderia ambifaria (strain MC40-6).